A 324-amino-acid polypeptide reads, in one-letter code: MNTETSTQSAPSDTYDTSIYYNSSPRVTANDITTLTSFAAPAPQVLDYANTQYDIYRNQPAYYLPSYAPTAPTTFYSDFANFNVTRSQDFASVPAVANSSDVKPIIIKQEKSTPNATELIIQSRVDSQHEDTTTSTAGGAGVGGPRRTKFVLSVDRRKAATMRERRRLRKVNEAFEVVKQRTCPNPNQRLPKVEILRSAIDYINNLERMLQQAGKMTKIMEQNQHLQMTQQINGAPPHDYVTSSHFASSSYNPENMFDDDDLTDSDDDRDHHKLGNAVDLRRRNSLDRLSRIVASIPNEEAMTDEQLLQPANDVIDGEKKLEML.

Residues 125–146 (VDSQHEDTTTSTAGGAGVGGPR) form a disordered region. One can recognise a bHLH domain in the interval 155-206 (DRRKAATMRERRRLRKVNEAFEVVKQRTCPNPNQRLPKVEILRSAIDYINNL). A disordered region spans residues 251 to 272 (YNPENMFDDDDLTDSDDDRDHH). Over residues 256 to 267 (MFDDDDLTDSDD) the composition is skewed to acidic residues.

Efficient DNA binding requires dimerization with another bHLH protein. Body wall muscle cells; in clonal muscle precursors, in a set of early embryonic blastomeres (the ms-granddaughters), and in six glial-like cells called GLRS.

The protein resides in the nucleus. Its function is as follows. Involved in myogenesis, in cooperation with transcription factors unc-120 and hnd-1. Acts redundantly with fozi-1 to promote body wall muscle cell and coelomocyte specification in postembryonic mesoderm progenitors, probably through suppression of sem-2. The sequence is that of Myoblast determination protein 1 homolog from Caenorhabditis elegans.